A 446-amino-acid polypeptide reads, in one-letter code: Chromosomal replication initiator protein DnaA (446 aa).

Positions 1–82 (MENILDLWNQ…ELSIKFVIPQ (82 aa)) are domain I, interacts with DnaA modulators. A domain II region spans residues 83-103 (NQDVEDFMPKPQVKKAVKEDT). The tract at residues 104–332 (SDFPQNMLNP…VAYSSLINKD (229 aa)) is domain III, AAA+ region. Positions 154, 155, 156, 157, and 158 each coordinate ATP. Residue T158 coordinates Mg(2+). The short motif at 182 to 206 (SEKFTNEFINSIRDNKAVDFRNRYR) is the Initiator specific motif (ISM) element. Residues D214 and D215 each coordinate Mg(2+). The tract at residues 333 to 346 (INADLAAEALKDII) is linker. Residues 347-446 (PSSKPKVITI…HVKEIKEQLK (100 aa)) are domain IV, binds dsDNA.

The protein belongs to the DnaA family. The DNA replisome assembles sequentially on oriC in this order; DnaA, DnaD, DnaB, DnaI-DnaC helicase. Oligomerizes as a right-handed, spiral filament on DNA at oriC. Forms an ATP-dependent helix on DNA at oriC; both DnaD and YabA inhibit formation of the DnaA helix. Forms an ATP-dependent oligomer, formation is stimulated by ds- and ssDNA; monomeric ADP-Soj inhibits oligomer formation. Interacts with DnaD. Interacts with YabA, and via YabA, with the replication machinery subunit beta sliding clamp DnaN. Interacts with YabA via domain IIIa (residues 109-275). Isolated domain I forms a 1:1 complex with SirA. Interacts with Soj, probably via domain III. Interacts via domains I and III with CcrZ. Interacts via domain IV with skin prophage-like element protein YqaH.

Its subcellular location is the cytoplasm. The protein localises to the nucleoid. The catalysed reaction is ATP + H2O = ADP + phosphate + H(+). With respect to regulation, oligomerization of DnaA can be controlled by Soj; monomeric ADP-Soj inhibits formation of the DnaA helix. YabA prevents the cooperative binding of DnaA-ATP to oriC-containing sequences; increased levels of DnaN (beta sliding clamp subunit of DNA polymerase) removes YabA from association with DnaA on the chromosome, enabling increased association of DnaA with its chromosomal binding sites. Both Soj and YabA chase DnaA from oriC site, YabA tethers DnaA to the DNA replication fork via the beta sliding clamp subunit DnaN. SirA antagonizes the ability of DnaA to bind to the replication origin, and thus decreases replication inititation during sporulation. Small protein YqaH, part of the skin prophage-like element, binds to DnaA and antagonizes its replication initiation and transcriptional regulation activities. Plays an essential role in the initiation and regulation of chromosomal replication. ATP-DnaA binds to the origin of replication (oriC) to initiate formation of the DNA replication initiation complex once per cell cycle. Binds directly to oriC at a 9 bp consensus (DnaA box): 5'-TTATCCACA-3' and separates the double-stranded (ds)DNA. Forms a right-handed helical filament on oriC DNA; dsDNA binds to the exterior of the filament while single-stranded (ss)DNA is stabilized in the filament's interior. The ATP-DnaA-oriC complex binds and stabilizes one strand of the AT-rich DNA unwinding element (DUE or basal unwinding system, BUS), permitting loading of DNA polymerase. Binds ATP with high affinity, ADP with lower affinity, but not AMP, cAMP or cGMP; ATP stimulates binding to DnaA boxes. Once bound promotes sequence-specific strand separation of DnaA-trios (3'-GAT-5' consensus) adjacent to oriC in the presence of ATP but not ADP. Domains III and IV are sufficient to separate dsDNA strands. The 'initiator specific motif' (ISM) of domain III contacts the middle adenine residue of the DnaA-trio probably stretching and stabilizing ssDNA. DnaA-trio recognition is co-operative and depends on DnaA self-assembly. The ssDNA serves as an assembly region for the replication machinery. Tethered to DnaN (beta sliding clamp subunit of DNA polymerase) and thus replication forks by YabA. During replication initiation DnaA-ATP binds cooperatively to sequences in oriC. YabA prevents this cooperative binding while still allowing DnaA to bind DNA. During the cell cycle an initial phase occurs in which DnaA is associated with origin regions, then the origin regions become spatially separate from the centrally sequestered DnaA molecules, and most DnaA molecules are unable to reassociate with origin regions. Does not require YabA to bind DNA. During sporulation SirA prevents DnaA association with the replication origin to prevent excessive chromosome replication. Overexpression induces the SOS response; increasing expression of downstream dnaN blocks this induction. Over-initiation of DNA replication is very deleterious; isolated suppressors in relA, ndrR, dnaC, cshA and crrZ increase replication elongation, decrease replication inititation or lead to a decrease in the replicative DNA helicase. Binds acidic phospholipids. In terms of biological role, the half-life of ADP-DnaA is 1.5 minutes, of ATP-DnaA is 5 minutes at 37 degrees Celsius; in E.coli the half-life of ADP-DnaA is about 45 minutes. Functionally, also acts as a transcriptional regulator. DnaA inhibits its own gene expression. DnaA binds specifically to the promoter regions of at least 20 operons (56 genes), including itself, sda and dnaB, and probably controls their expression in response to DNA replication inhibition. The protein is Chromosomal replication initiator protein DnaA of Bacillus subtilis (strain 168).